The chain runs to 373 residues: uncharacterized protein (373 aa).

A helical transmembrane segment spans residues Tyr-180–Trp-202.

It is found in the membrane. This is an uncharacterized protein from Rickettsia prowazekii (strain Madrid E).